We begin with the raw amino-acid sequence, 548 residues long: Chaperonin GroEL (548 aa).

Residues 29-32 (TLGP), K50, 86-90 (DGTTT), G414, 478-480 (NAA), and D494 contribute to the ATP site.

This sequence belongs to the chaperonin (HSP60) family. Forms a cylinder of 14 subunits composed of two heptameric rings stacked back-to-back. Interacts with the co-chaperonin GroES.

Its subcellular location is the cytoplasm. It catalyses the reaction ATP + H2O + a folded polypeptide = ADP + phosphate + an unfolded polypeptide.. Functionally, together with its co-chaperonin GroES, plays an essential role in assisting protein folding. The GroEL-GroES system forms a nano-cage that allows encapsulation of the non-native substrate proteins and provides a physical environment optimized to promote and accelerate protein folding. The polypeptide is Chaperonin GroEL (Psychrobacter sp. (strain PRwf-1)).